We begin with the raw amino-acid sequence, 397 residues long: Trans-2-enoyl-CoA reductase [NADH] (397 aa).

NAD(+)-binding positions include 53–58, 79–80, 116–117, and 144–145; these read GCSNGY, FE, DA, and LA. Y230 contacts substrate. Catalysis depends on Y240, which acts as the Proton donor. NAD(+)-binding positions include K249 and 276–278; that span reads LVT.

The protein belongs to the TER reductase family. In terms of assembly, monomer.

It catalyses the reaction a 2,3-saturated acyl-CoA + NAD(+) = a (2E)-enoyl-CoA + NADH + H(+). The protein operates within lipid metabolism; fatty acid biosynthesis. With respect to regulation, inhibited by lauroyl-CoA. Involved in the fatty acid synthesis (FAS II). Catalyzes the reduction of the carbon-carbon double bond of crotonyl-CoA to yield butyryl-CoA. In vitro it can also use hexenoyl-CoA and dodecenoyl-CoA as substrates. This is Trans-2-enoyl-CoA reductase [NADH] from Treponema denticola (strain ATCC 35405 / DSM 14222 / CIP 103919 / JCM 8153 / KCTC 15104).